Reading from the N-terminus, the 111-residue chain is Nucleoid-associated protein Cag_1190 (111 aa).

The protein belongs to the YbaB/EbfC family. In terms of assembly, homodimer.

It is found in the cytoplasm. The protein resides in the nucleoid. Its function is as follows. Binds to DNA and alters its conformation. May be involved in regulation of gene expression, nucleoid organization and DNA protection. The chain is Nucleoid-associated protein Cag_1190 from Chlorobium chlorochromatii (strain CaD3).